The primary structure comprises 536 residues: E3 ubiquitin-protein ligase Godzilla (536 aa).

A signal peptide spans 1 to 21; sequence MSKRSCQILTLLGLCLVCHEA. Residues 22-174 lie on the Extracellular side of the membrane; the sequence is TLVGGHVLVY…DELPFNINTQ (153 aa). Positions 89–151 constitute a PA domain; sequence FVALVARGEC…FVGHTTGKAL (63 aa). 2 N-linked (GlcNAc...) asparagine glycosylation sites follow: Asn109 and Asn132. Residues 175–195 form a helical membrane-spanning segment; that stretch reads LILPFSILIGMCFIIMVIYMI. Residues 196-536 lie on the Cytoplasmic side of the membrane; the sequence is YKCIREQRRL…HSASDRQFLI (341 aa). The segment at 235-277 adopts an RING-type; atypical zinc-finger fold; that stretch reads CVICLEDFIEDDKLRVLPCSHPYHTHCIDPWLTENRRVCPICK. 2 disordered regions span residues 287 to 334 and 350 to 372; these read RASR…GAAG and HGTFRRGHAGRNPFEESQSSDDE. Positions 307–334 are enriched in low complexity; that stretch reads TPLLQQQQSNGRQVGQVSSASSAGGAAG.

It belongs to the Godzilla family.

The protein resides in the endosome membrane. It carries out the reaction S-ubiquitinyl-[E2 ubiquitin-conjugating enzyme]-L-cysteine + [acceptor protein]-L-lysine = [E2 ubiquitin-conjugating enzyme]-L-cysteine + N(6)-ubiquitinyl-[acceptor protein]-L-lysine.. Its pathway is protein modification; protein ubiquitination. In terms of biological role, endosomal E3 ubiquitin-protein ligase that regulates the recycling endosome pathway by mediating ubiquitination of Synaptobrevin (Syb). Also acts as a regulator of transcytosis in wing imaginal disks by catalyzing ubiquitination of Syb: ubiquitination of Syb promotes transcytosis of wingless (wg) to the basolateral surface. In Drosophila melanogaster (Fruit fly), this protein is E3 ubiquitin-protein ligase Godzilla.